Reading from the N-terminus, the 854-residue chain is Protein asteroid (854 aa).

Residues 368 to 427 form a disordered region; it reads SEEECSDDEHSSSSDEKFSDVEEGEDQEEADNQDEEQQEENQDVDSGDEEEEEADEGLEL. Residues 375-387 show a composition bias toward basic and acidic residues; sequence DEHSSSSDEKFSD. Residues 388 to 427 are compositionally biased toward acidic residues; that stretch reads VEEGEDQEEADNQDEEQQEENQDVDSGDEEEEEADEGLEL.

The protein belongs to the asteroid family. Expressed in the proliferative tissues of embryos and in the mitotically active tissue anterior to the morphogenetic furrow in eye imaginal disks.

In terms of biological role, may function in EGF receptor signaling. May play a role in compound eye morphogenesis. The polypeptide is Protein asteroid (ast) (Drosophila melanogaster (Fruit fly)).